A 432-amino-acid polypeptide reads, in one-letter code: Adenylosuccinate synthetase (432 aa).

Residues 13 to 19 and 41 to 43 contribute to the GTP site; these read GDEGKGK and GHT. The active-site Proton acceptor is Asp14. Mg(2+) contacts are provided by Asp14 and Gly41. IMP contacts are provided by residues 14 to 17, 39 to 42, Thr130, Arg144, Gln225, Thr240, and Arg304; these read DEGK and NAGH. His42 acts as the Proton donor in catalysis. 300–306 lines the substrate pocket; the sequence is AVTGRPR. GTP is bound by residues Arg306, 332–334, and 415–417; these read KLD and STG.

The protein belongs to the adenylosuccinate synthetase family. Homodimer. The cofactor is Mg(2+).

It localises to the cytoplasm. The enzyme catalyses IMP + L-aspartate + GTP = N(6)-(1,2-dicarboxyethyl)-AMP + GDP + phosphate + 2 H(+). It participates in purine metabolism; AMP biosynthesis via de novo pathway; AMP from IMP: step 1/2. Plays an important role in the de novo pathway of purine nucleotide biosynthesis. Catalyzes the first committed step in the biosynthesis of AMP from IMP. The sequence is that of Adenylosuccinate synthetase from Actinobacillus pleuropneumoniae serotype 5b (strain L20).